A 371-amino-acid chain; its full sequence is Ribosomal RNA small subunit methyltransferase H (371 aa).

S-adenosyl-L-methionine contacts are provided by residues 43–45 (GGH), Asp-62, Leu-96, Asp-110, and Gln-117. The interval 315–371 (AAERLDPTQQQRQRTDRERYRRQVRAMHQPGTGSAVRRPVSGDDGTGTDEEGEGHDD) is disordered. A compositionally biased stretch (acidic residues) spans 360-371 (TGTDEEGEGHDD).

This sequence belongs to the methyltransferase superfamily. RsmH family.

It localises to the cytoplasm. The catalysed reaction is cytidine(1402) in 16S rRNA + S-adenosyl-L-methionine = N(4)-methylcytidine(1402) in 16S rRNA + S-adenosyl-L-homocysteine + H(+). In terms of biological role, specifically methylates the N4 position of cytidine in position 1402 (C1402) of 16S rRNA. This is Ribosomal RNA small subunit methyltransferase H from Salinispora tropica (strain ATCC BAA-916 / DSM 44818 / JCM 13857 / NBRC 105044 / CNB-440).